The primary structure comprises 186 residues: UPF0398 protein BPUM_1952 (186 aa).

Belongs to the UPF0398 family.

The protein is UPF0398 protein BPUM_1952 of Bacillus pumilus (strain SAFR-032).